Consider the following 487-residue polypeptide: 4-alpha-glucanotransferase (487 aa).

It belongs to the disproportionating enzyme family.

Its subcellular location is the cytoplasm. The enzyme catalyses Transfers a segment of a (1-&gt;4)-alpha-D-glucan to a new position in an acceptor, which may be glucose or a (1-&gt;4)-alpha-D-glucan.. Catalyzes a disproportionation reaction in which single or multiple glucose units from oligosaccharides are transferred to the 4-hydroxyl group of acceptor sugars. Glucose, maltose and maltotriose can act as acceptor, whereas of the three only maltotriose can act as donor. The polypeptide is 4-alpha-glucanotransferase (malQ) (Clostridium butyricum).